The primary structure comprises 398 residues: tRNA(Ile)-lysidine synthase (398 aa).

ATP is bound at residue 17–22; it reads SGGPDS.

This sequence belongs to the tRNA(Ile)-lysidine synthase family.

It is found in the cytoplasm. The enzyme catalyses cytidine(34) in tRNA(Ile2) + L-lysine + ATP = lysidine(34) in tRNA(Ile2) + AMP + diphosphate + H(+). Functionally, ligates lysine onto the cytidine present at position 34 of the AUA codon-specific tRNA(Ile) that contains the anticodon CAU, in an ATP-dependent manner. Cytidine is converted to lysidine, thus changing the amino acid specificity of the tRNA from methionine to isoleucine. The sequence is that of tRNA(Ile)-lysidine synthase from Mesoplasma florum (strain ATCC 33453 / NBRC 100688 / NCTC 11704 / L1) (Acholeplasma florum).